Reading from the N-terminus, the 240-residue chain is MGNTQPLPILITGGGRRIGLALAWHFINQKQPVIVSYRTHYPAIDGLINAGAQCIQADFSTNDGVMAFADEVLKSTHGLRAILHNASAWMAEKPGAPLADVLACMMQIHVNTPYLLNHALERLLRGHGHAASDIIHFTDYVVERGSDKHIAYAASKAALDNMTRSFARKLAPEVKVNSIAPSLILFNEHDDAEYRQQALNKSLMKTAPGEKEVIDLVDYLLTSCFVTGRSFPLDGGRHLR.

The active-site Proton acceptor is Y152.

Belongs to the short-chain dehydrogenases/reductases (SDR) family. FolM subfamily.

The catalysed reaction is (6S)-5,6,7,8-tetrahydrofolate + NADP(+) = 7,8-dihydrofolate + NADPH + H(+). It catalyses the reaction 7,8-dihydromonapterin + NADPH + H(+) = 5,6,7,8-tetrahydromonapterin + NADP(+). Functionally, catalyzes the reduction of dihydromonapterin to tetrahydromonapterin. Also has lower activity with dihydrofolate. The sequence is that of Dihydromonapterin reductase (folM) from Escherichia coli O139:H28 (strain E24377A / ETEC).